The following is a 477-amino-acid chain: Sulfate adenylyltransferase subunit 1 (477 aa).

The tr-type G domain maps to 22–239 (KDMLRFITCG…TVQISHDAPL (218 aa)). The interval 31 to 38 (GSVDDGKS) is G1. 31-38 (GSVDDGKS) lines the GTP pocket. The tract at residues 89–93 (GITID) is G2. Residues 110-113 (DCPG) form a G3 region. GTP-binding positions include 110–114 (DCPGH) and 165–168 (NKMD). Positions 165 to 168 (NKMD) are G4. The G5 stretch occupies residues 202-204 (SAL).

Belongs to the TRAFAC class translation factor GTPase superfamily. Classic translation factor GTPase family. CysN/NodQ subfamily. In terms of assembly, heterodimer composed of CysD, the smaller subunit, and CysN.

The catalysed reaction is sulfate + ATP + H(+) = adenosine 5'-phosphosulfate + diphosphate. The protein operates within sulfur metabolism; hydrogen sulfide biosynthesis; sulfite from sulfate: step 1/3. With CysD forms the ATP sulfurylase (ATPS) that catalyzes the adenylation of sulfate producing adenosine 5'-phosphosulfate (APS) and diphosphate, the first enzymatic step in sulfur assimilation pathway. APS synthesis involves the formation of a high-energy phosphoric-sulfuric acid anhydride bond driven by GTP hydrolysis by CysN coupled to ATP hydrolysis by CysD. This Chromobacterium violaceum (strain ATCC 12472 / DSM 30191 / JCM 1249 / CCUG 213 / NBRC 12614 / NCIMB 9131 / NCTC 9757 / MK) protein is Sulfate adenylyltransferase subunit 1.